The following is a 122-amino-acid chain: Ribosome-binding factor A (122 aa).

Belongs to the RbfA family. In terms of assembly, monomer. Binds 30S ribosomal subunits, but not 50S ribosomal subunits or 70S ribosomes.

Its subcellular location is the cytoplasm. In terms of biological role, one of several proteins that assist in the late maturation steps of the functional core of the 30S ribosomal subunit. Associates with free 30S ribosomal subunits (but not with 30S subunits that are part of 70S ribosomes or polysomes). Required for efficient processing of 16S rRNA. May interact with the 5'-terminal helix region of 16S rRNA. In Albidiferax ferrireducens (strain ATCC BAA-621 / DSM 15236 / T118) (Rhodoferax ferrireducens), this protein is Ribosome-binding factor A.